Consider the following 277-residue polypeptide: 4-hydroxy-tetrahydrodipicolinate reductase (277 aa).

NAD(+) is bound by residues Gly-11 to Met-16 and Gly-110 to Thr-112. The active-site Proton donor/acceptor is the His-166. Position 167 (His-167) interacts with (S)-2,3,4,5-tetrahydrodipicolinate. Lys-170 functions as the Proton donor in the catalytic mechanism. Residue Gly-176–Thr-177 coordinates (S)-2,3,4,5-tetrahydrodipicolinate.

The protein belongs to the DapB family.

It localises to the cytoplasm. The enzyme catalyses (S)-2,3,4,5-tetrahydrodipicolinate + NAD(+) + H2O = (2S,4S)-4-hydroxy-2,3,4,5-tetrahydrodipicolinate + NADH + H(+). It carries out the reaction (S)-2,3,4,5-tetrahydrodipicolinate + NADP(+) + H2O = (2S,4S)-4-hydroxy-2,3,4,5-tetrahydrodipicolinate + NADPH + H(+). The protein operates within amino-acid biosynthesis; L-lysine biosynthesis via DAP pathway; (S)-tetrahydrodipicolinate from L-aspartate: step 4/4. In terms of biological role, catalyzes the conversion of 4-hydroxy-tetrahydrodipicolinate (HTPA) to tetrahydrodipicolinate. This chain is 4-hydroxy-tetrahydrodipicolinate reductase, found in Parasynechococcus marenigrum (strain WH8102).